Here is a 498-residue protein sequence, read N- to C-terminus: ATP synthase subunit beta, chloroplastic (498 aa).

Residue 172-179 (GGAGVGKT) participates in ATP binding.

This sequence belongs to the ATPase alpha/beta chains family. As to quaternary structure, F-type ATPases have 2 components, CF(1) - the catalytic core - and CF(0) - the membrane proton channel. CF(1) has five subunits: alpha(3), beta(3), gamma(1), delta(1), epsilon(1). CF(0) has four main subunits: a(1), b(1), b'(1) and c(9-12).

The protein resides in the plastid. Its subcellular location is the chloroplast thylakoid membrane. It catalyses the reaction ATP + H2O + 4 H(+)(in) = ADP + phosphate + 5 H(+)(out). In terms of biological role, produces ATP from ADP in the presence of a proton gradient across the membrane. The catalytic sites are hosted primarily by the beta subunits. The protein is ATP synthase subunit beta, chloroplastic of Castanea sativa (Sweet chestnut).